The primary structure comprises 343 residues: Methionine import ATP-binding protein MetN (343 aa).

Residues 2-241 (IKLSNITKVF…PKTPLAQKFI (240 aa)) form the ABC transporter domain. 38-45 (GASGAGKS) contributes to the ATP binding site.

This sequence belongs to the ABC transporter superfamily. Methionine importer (TC 3.A.1.24) family. The complex is composed of two ATP-binding proteins (MetN), two transmembrane proteins (MetI) and a solute-binding protein (MetQ).

It localises to the cell inner membrane. The enzyme catalyses L-methionine(out) + ATP + H2O = L-methionine(in) + ADP + phosphate + H(+). The catalysed reaction is D-methionine(out) + ATP + H2O = D-methionine(in) + ADP + phosphate + H(+). Functionally, part of the ABC transporter complex MetNIQ involved in methionine import. Responsible for energy coupling to the transport system. This Escherichia coli O157:H7 protein is Methionine import ATP-binding protein MetN.